A 527-amino-acid chain; its full sequence is Amine oxidase [flavin-containing] A (527 aa).

Position 1 is an N-acetylmethionine (methionine 1). Residues 1 to 497 (MASREKTSIE…HTFWERNLPS (497 aa)) lie on the Cytoplasmic side of the membrane. Residue serine 383 is modified to Phosphoserine. Cysteine 406 bears the S-8alpha-FAD cysteine mark. Residues 498–518 (VTGLLKLIGFTTSVTALWIVA) traverse the membrane as a helical; Anchor for type IV membrane protein segment. At 519–527 (YKFRLLRRS) the chain is on the mitochondrial intermembrane side. Positions 520 to 522 (KFR) are interaction with membrane phospholipid headgroups.

The protein belongs to the flavin monoamine oxidase family. In terms of assembly, monomer, homo- or heterodimer (containing two subunits of similar size). Each subunit contains a covalently bound flavin. Enzymatically active as monomer. Requires FAD as cofactor.

The protein localises to the mitochondrion outer membrane. It carries out the reaction a secondary aliphatic amine + O2 + H2O = a primary amine + an aldehyde + H2O2. The catalysed reaction is a primary methyl amine + O2 + H2O = an aldehyde + H2O2 + NH4(+). The enzyme catalyses (R)-adrenaline + O2 + H2O = (R)-3,4-dihydroxymandelaldehyde + methylamine + H2O2. It catalyses the reaction dopamine + O2 + H2O = 3,4-dihydroxyphenylacetaldehyde + H2O2 + NH4(+). It carries out the reaction tyramine + O2 + H2O = (4-hydroxyphenyl)acetaldehyde + H2O2 + NH4(+). The catalysed reaction is (R)-noradrenaline + O2 + H2O = (R)-3,4-dihydroxymandelaldehyde + H2O2 + NH4(+). The enzyme catalyses serotonin + O2 + H2O = (5-hydroxyindol-3-yl)acetaldehyde + H2O2 + NH4(+). It catalyses the reaction kynuramine + O2 + H2O = 3-(2-aminophenyl)-3-oxopropanal + H2O2 + NH4(+). It carries out the reaction tryptamine + O2 + H2O = indole-3-acetaldehyde + H2O2 + NH4(+). The catalysed reaction is 2-phenylethylamine + O2 + H2O = 2-phenylacetaldehyde + H2O2 + NH4(+). Its function is as follows. Catalyzes the oxidative deamination of primary and some secondary amine such as neurotransmitters, with concomitant reduction of oxygen to hydrogen peroxide and has important functions in the metabolism of neuroactive and vasoactive amines in the central nervous system and peripheral tissues. Preferentially oxidizes serotonin. Also catalyzes the oxidative deamination of kynuramine to 3-(2-aminophenyl)-3-oxopropanal that can spontaneously condense to 4-hydroxyquinoline. The chain is Amine oxidase [flavin-containing] A from Canis lupus familiaris (Dog).